A 67-amino-acid polypeptide reads, in one-letter code: MIIEFNLLVILLVQMPLSFYMLYRLCYLLFCFLECFLNLFKKCGVFKNAKWLTRIQRVFYLYLFVYR.

Residues C26–F46 traverse the membrane as a helical segment.

Belongs to the plectrovirus ORF11 family.

It localises to the host membrane. This is an uncharacterized protein from Spiroplasma virus SpV1-C74 (SpV1).